Consider the following 558-residue polypeptide: Formate--tetrahydrofolate ligase (558 aa).

Position 66 to 73 (66 to 73) interacts with ATP; sequence TPAGEGKT.

The protein belongs to the formate--tetrahydrofolate ligase family.

It catalyses the reaction (6S)-5,6,7,8-tetrahydrofolate + formate + ATP = (6R)-10-formyltetrahydrofolate + ADP + phosphate. The protein operates within one-carbon metabolism; tetrahydrofolate interconversion. This Clostridioides difficile (strain 630) (Peptoclostridium difficile) protein is Formate--tetrahydrofolate ligase.